The chain runs to 562 residues: Cytosolic Fe-S cluster assembly factor nar1 (562 aa).

Residue cysteine 20 coordinates [4Fe-4S] cluster. The disordered stretch occupies residues 28-47 (PKNESSNSQNPYEVTTEDKV). Residues 29-40 (KNESSNSQNPYE) show a composition bias toward polar residues. Cysteine 62, cysteine 65, cysteine 68, cysteine 214, and cysteine 269 together coordinate [4Fe-4S] cluster. Residues 439–462 (ARVPAASAGGNRRQPISRNSASAG) are disordered. Residues 452-462 (QPISRNSASAG) show a composition bias toward polar residues. Residues cysteine 475 and cysteine 479 each contribute to the [4Fe-4S] cluster site. Disordered stretches follow at residues 492–513 (REAS…PTPH) and 541–562 (HSPS…IGLT). Positions 494 to 505 (ASTSTQSVTAVE) are enriched in polar residues.

It belongs to the NARF family.

In terms of biological role, component of the cytosolic Fe/S protein assembly machinery. Required for maturation of extramitochondrial Fe/S proteins. May play a role in the transfer of pre-assembled Fe/S clusters to target apoproteins. The protein is Cytosolic Fe-S cluster assembly factor nar1 (nar1) of Aspergillus flavus (strain ATCC 200026 / FGSC A1120 / IAM 13836 / NRRL 3357 / JCM 12722 / SRRC 167).